The chain runs to 433 residues: N-lysine methyltransferase SMYD2 (433 aa).

One can recognise an SET domain in the interval Gly-7 to Ile-241. Position 17-19 (Lys-17–Arg-19) interacts with S-adenosyl-L-methionine. Residues Cys-52, Cys-55, Cys-65, Cys-68, Cys-74, Cys-78, His-86, and Cys-90 each contribute to the Zn(2+) site. The MYND-type zinc finger occupies Cys-52–Cys-90. Residues His-137, Asn-206 to His-207, and Tyr-258 to Phe-260 each bind S-adenosyl-L-methionine.

This sequence belongs to the class V-like SAM-binding methyltransferase superfamily. Interacts with RNA polymerase II and HELZ. Interacts with SIN3A and HDAC1. Interacts (via MYND-type zinc finger) with EPB41L3. Interacts (via SET domain) with p53/TP53. Interacts with RB1 and HSP90AA1.

The protein localises to the cytoplasm. The protein resides in the cytosol. It localises to the nucleus. It carries out the reaction L-lysyl(4)-[histone H3] + 3 S-adenosyl-L-methionine = N(6),N(6),N(6)-trimethyl-L-lysyl(4)-[histone H3] + 3 S-adenosyl-L-homocysteine + 3 H(+). The catalysed reaction is L-lysyl-[protein] + S-adenosyl-L-methionine = N(6)-methyl-L-lysyl-[protein] + S-adenosyl-L-homocysteine + H(+). In terms of biological role, protein-lysine N-methyltransferase that methylates both histones and non-histone proteins, including p53/TP53 and RB1. Specifically trimethylates histone H3 'Lys-4' (H3K4me3) in vivo. The activity requires interaction with HSP90alpha. Shows even higher methyltransferase activity on p53/TP53. Monomethylates 'Lys-370' of p53/TP53, leading to decreased DNA-binding activity and subsequent transcriptional regulation activity of p53/TP53. Monomethylates RB1 at 'Lys-860'. The protein is N-lysine methyltransferase SMYD2 (SMYD2) of Bos taurus (Bovine).